A 395-amino-acid polypeptide reads, in one-letter code: Pyruvate synthase subunit PorA (395 aa).

As to quaternary structure, heterotetramer of one alpha, one beta, one delta and one gamma chain.

It carries out the reaction 2 oxidized [2Fe-2S]-[ferredoxin] + pyruvate + CoA = 2 reduced [2Fe-2S]-[ferredoxin] + acetyl-CoA + CO2 + H(+). This chain is Pyruvate synthase subunit PorA (porA), found in Pyrococcus abyssi (strain GE5 / Orsay).